A 415-amino-acid chain; its full sequence is Beta-1,4-glucuronyltransferase 1 (415 aa).

Over 1 to 8 (MQMSYAIR) the chain is Cytoplasmic. Residues 9 to 36 (CAFYQLLLAALMLVAMLQLLYLSLLSGL) traverse the membrane as a helical; Signal-anchor for type II membrane protein segment. The Lumenal segment spans residues 37-415 (HGQEEQDQYF…AKYPDSPRHC (379 aa)). Asn204 carries an N-linked (GlcNAc...) asparagine glycan. The Mn(2+) site is built by Asp227 and Asp229. N-linked (GlcNAc...) asparagine glycosylation is present at Asn300.

It belongs to the glycosyltransferase 49 family. Interacts with LARGE1 and LARGE2. Mn(2+) serves as cofactor.

It localises to the golgi apparatus membrane. The enzyme catalyses 3-O-[beta-D-Xyl-(1-&gt;4)-Rib-ol-P-Rib-ol-P-3-beta-D-GalNAc-(1-&gt;3)-beta-D-GlcNAc-(1-&gt;4)-(O-6-P-alpha-D-Man)]-Thr-[protein] + UDP-alpha-D-glucuronate = 3-O-[beta-D-GlcA-(1-&gt;3)-beta-D-Xyl-(1-&gt;4)-Rib-ol-P-Rib-ol-P-3-beta-D-GalNAc-(1-&gt;3)-beta-D-GlcNAc-(1-&gt;4)-(O-6-P-alpha-D-Man)]-Thr-[protein] + UDP + H(+). It functions in the pathway protein modification; protein glycosylation. Functionally, beta-1,4-glucuronyltransferase involved in O-mannosylation of alpha-dystroglycan (DAG1). Transfers a glucuronic acid (GlcA) residue onto a xylose (Xyl) acceptor to produce the glucuronyl-beta-1,4-xylose-beta disaccharide primer, which is further elongated by LARGE1, during synthesis of phosphorylated O-mannosyl glycan. Phosphorylated O-mannosyl glycan is a carbohydrate structure present in alpha-dystroglycan (DAG1), which is required for binding laminin G-like domain-containing extracellular proteins with high affinity. Required for axon guidance; via its function in O-mannosylation of alpha-dystroglycan (DAG1). In Bos taurus (Bovine), this protein is Beta-1,4-glucuronyltransferase 1.